The sequence spans 314 residues: Ribosomal RNA small subunit methyltransferase A (314 aa).

Positions 29, 31, 56, 77, 107, and 126 each coordinate S-adenosyl-L-methionine. The tract at residues 291–314 (PKADDAGDDADAQAKADGAQVSTL) is disordered. Positions 303 to 314 (QAKADGAQVSTL) are enriched in low complexity.

The protein belongs to the class I-like SAM-binding methyltransferase superfamily. rRNA adenine N(6)-methyltransferase family. RsmA subfamily.

The protein resides in the cytoplasm. The catalysed reaction is adenosine(1518)/adenosine(1519) in 16S rRNA + 4 S-adenosyl-L-methionine = N(6)-dimethyladenosine(1518)/N(6)-dimethyladenosine(1519) in 16S rRNA + 4 S-adenosyl-L-homocysteine + 4 H(+). Specifically dimethylates two adjacent adenosines (A1518 and A1519) in the loop of a conserved hairpin near the 3'-end of 16S rRNA in the 30S particle. May play a critical role in biogenesis of 30S subunits. The sequence is that of Ribosomal RNA small subunit methyltransferase A from Mycolicibacterium gilvum (strain PYR-GCK) (Mycobacterium gilvum (strain PYR-GCK)).